The primary structure comprises 350 residues: Pleckstrin (350 aa).

The 98-residue stretch at 4 to 101 (KRIREGYLVK…WVRDIKKAIK (98 aa)) folds into the PH 1 domain. The residue at position 64 (Lys-64) is an N6-acetyllysine. Ser-113 and Ser-117 each carry phosphoserine. A DEP domain is found at 136-221 (PEKGIKELNL…SPDAFYYFPD (86 aa)). Positions 244-347 (VIIKQGCLLK…WIKAIQVASR (104 aa)) constitute a PH 2 domain.

Its function is as follows. Major protein kinase C substrate of platelets. This is Pleckstrin (Plek) from Mus musculus (Mouse).